The primary structure comprises 58 residues: Metallothionein (58 aa).

Residues 1 to 29 (MPGPCCNDVCECAAGGCKTGCVCTSCRCS) form a beta region. The a divalent metal cation site is built by Cys-5, Cys-6, Cys-10, Cys-12, Cys-17, Cys-21, Cys-23, Cys-26, Cys-28, Cys-31, Cys-34, Cys-38, Cys-40, Cys-46, Cys-50, Cys-54, Cys-56, and Cys-57. The segment at 30–58 (PCDKCTSGCKCPSKEECAKTCSKPCECCP) is alpha.

Its function is as follows. Metallothioneins have a high content of cysteine residues that bind various heavy metals. Class I MTS in crustacea are involved in the sequestration of elevated levels of heavy-metal ions. The chain is Metallothionein from Astacus astacus (Noble crayfish).